A 734-amino-acid chain; its full sequence is Ribosomal RNA large subunit methyltransferase K/L (734 aa).

Residues 49–167 form the THUMP domain; the sequence is HAYRICMWSR…KTEHTYCLDL (119 aa).

It belongs to the methyltransferase superfamily. RlmKL family.

The protein localises to the cytoplasm. It carries out the reaction guanosine(2445) in 23S rRNA + S-adenosyl-L-methionine = N(2)-methylguanosine(2445) in 23S rRNA + S-adenosyl-L-homocysteine + H(+). The enzyme catalyses guanosine(2069) in 23S rRNA + S-adenosyl-L-methionine = N(2)-methylguanosine(2069) in 23S rRNA + S-adenosyl-L-homocysteine + H(+). Functionally, specifically methylates the guanine in position 2445 (m2G2445) and the guanine in position 2069 (m7G2069) of 23S rRNA. The chain is Ribosomal RNA large subunit methyltransferase K/L from Acinetobacter baumannii (strain AYE).